Reading from the N-terminus, the 373-residue chain is Queuine tRNA-ribosyltransferase accessory subunit 2 (373 aa).

Zn(2+) is bound by residues cysteine 320, cysteine 322, cysteine 325, and histidine 351.

Belongs to the queuine tRNA-ribosyltransferase family. QTRT2 subfamily. As to quaternary structure, heterodimer of a catalytic subunit and an accessory subunit. It depends on Zn(2+) as a cofactor.

It localises to the cytoplasm. Its function is as follows. Non-catalytic subunit of the queuine tRNA-ribosyltransferase (TGT) that catalyzes the base-exchange of a guanine (G) residue with queuine (Q) at position 34 (anticodon wobble position) in tRNAs with GU(N) anticodons (tRNA-Asp, -Asn, -His and -Tyr), resulting in the hypermodified nucleoside queuosine (7-(((4,5-cis-dihydroxy-2-cyclopenten-1-yl)amino)methyl)-7-deazaguanosine). The polypeptide is Queuine tRNA-ribosyltransferase accessory subunit 2 (Caenorhabditis elegans).